A 399-amino-acid chain; its full sequence is Elongation factor Tu 1 (399 aa).

The region spanning 10–209 (KPHVNIGTIG…QVDTYIPEPE (200 aa)) is the tr-type G domain. The G1 stretch occupies residues 19-26 (GHVDHGKT). 19-26 (GHVDHGKT) contacts GTP. Residue T26 coordinates Mg(2+). The interval 60-64 (GITIA) is G2. A G3 region spans residues 81 to 84 (DCPG). Residues 81–85 (DCPGH) and 136–139 (NKAD) each bind GTP. Residues 136–139 (NKAD) are G4. Positions 174 to 176 (SAL) are G5.

The protein belongs to the TRAFAC class translation factor GTPase superfamily. Classic translation factor GTPase family. EF-Tu/EF-1A subfamily. Monomer.

Its subcellular location is the cytoplasm. It carries out the reaction GTP + H2O = GDP + phosphate + H(+). Its function is as follows. GTP hydrolase that promotes the GTP-dependent binding of aminoacyl-tRNA to the A-site of ribosomes during protein biosynthesis. This is Elongation factor Tu 1 from Syntrophotalea carbinolica (strain DSM 2380 / NBRC 103641 / GraBd1) (Pelobacter carbinolicus).